The following is a 145-amino-acid chain: Large ribosomal subunit protein uL16 (145 aa).

This sequence belongs to the universal ribosomal protein uL16 family. As to quaternary structure, part of the 50S ribosomal subunit.

In terms of biological role, binds 23S rRNA and is also seen to make contacts with the A and possibly P site tRNAs. This Herpetosiphon aurantiacus (strain ATCC 23779 / DSM 785 / 114-95) protein is Large ribosomal subunit protein uL16.